A 425-amino-acid polypeptide reads, in one-letter code: Enolase (425 aa).

Glutamine 163 is a (2R)-2-phosphoglycerate binding site. Glutamate 205 functions as the Proton donor in the catalytic mechanism. Mg(2+)-binding residues include aspartate 242, glutamate 285, and aspartate 312. (2R)-2-phosphoglycerate-binding residues include lysine 337, arginine 366, serine 367, and lysine 388. Lysine 337 functions as the Proton acceptor in the catalytic mechanism.

Belongs to the enolase family. Mg(2+) is required as a cofactor.

Its subcellular location is the cytoplasm. It is found in the secreted. The protein localises to the cell surface. The catalysed reaction is (2R)-2-phosphoglycerate = phosphoenolpyruvate + H2O. Its pathway is carbohydrate degradation; glycolysis; pyruvate from D-glyceraldehyde 3-phosphate: step 4/5. Its function is as follows. Catalyzes the reversible conversion of 2-phosphoglycerate (2-PG) into phosphoenolpyruvate (PEP). It is essential for the degradation of carbohydrates via glycolysis. This Acidiphilium cryptum (strain JF-5) protein is Enolase.